We begin with the raw amino-acid sequence, 372 residues long: Alanine dehydrogenase 1 (372 aa).

The active site involves His-94. NAD(+) is bound at residue 170–200; that stretch reads TYVIFGGGVAATNAANVALGLNAKVIIIELN.

It belongs to the AlaDH/PNT family.

It catalyses the reaction L-alanine + NAD(+) + H2O = pyruvate + NH4(+) + NADH + H(+). It participates in amino-acid degradation; L-alanine degradation via dehydrogenase pathway; NH(3) and pyruvate from L-alanine: step 1/1. Functionally, may play a role in cell wall synthesis as L-alanine is an important constituent of the peptidoglycan layer. The sequence is that of Alanine dehydrogenase 1 (ald1) from Staphylococcus aureus (strain USA300).